A 691-amino-acid polypeptide reads, in one-letter code: MARDFPLERVRNIGIAAHIDAGKTTTTERILFYSGVVHKIGEVHDGAAVTDWMAQERERGITITAAAISTSWQDHRINIIDTPGHVDFTIEVERSMRVLDGVIAVFCAVGGVQPQSETVWRQADRYSVPRMVFVNKMDRTGADFLKVNQQIKDRLKANAFPIQLPIGAEGDLSGIIDLVSNKAYLYKNDLGTDIEEAPIPDEMKDEALEWRSKLMESVAENDEELIEIFLDKGELTEDQLKKGIREGVLKHGLVPVLCGSAFKNKGVQLVLDAVVDYLPAPIDVKPIQGVLPNGKEDVRPSDDNAPFSALAFKVMSDPYGKLTFVRMYSGVLSKGSYVMNSTKDAKERISRLVILKADEREEVDELRAGDLGAVLGLKNTTTGDTLCNTDDPIVLETLFIPEPVISVAVEPKTKGDMEKLSKALQALSEEDPTFRVSTDQETNQTVIAGMGELHLEILVDRMLREFKVEANIGAPQVSYRETIRSSSKGEGKYARQTGGKGQYGHVVIEMEPAEVGKGFEFVNKIVGGTVPKEYIGPASNGMKETCESGVLAGYPLIDVKVTLVDGSFHDVDSSEMAFKIAGSMAFKDGVKKCNPVLLEPMMKVEVESPDDFLGSVIGDLSSRRGQVEGQSVDDGLSKVQAKVPLAEMFGYATQLRSMTQGRGIFSMEFANYEEVPRNVAEAIISKNQGNS.

A tr-type G domain is found at 8 to 282; the sequence is ERVRNIGIAA…AVVDYLPAPI (275 aa). Residues 17 to 24, 81 to 85, and 135 to 138 contribute to the GTP site; these read AHIDAGKT, DTPGH, and NKMD.

It belongs to the TRAFAC class translation factor GTPase superfamily. Classic translation factor GTPase family. EF-G/EF-2 subfamily.

It localises to the cytoplasm. Catalyzes the GTP-dependent ribosomal translocation step during translation elongation. During this step, the ribosome changes from the pre-translocational (PRE) to the post-translocational (POST) state as the newly formed A-site-bound peptidyl-tRNA and P-site-bound deacylated tRNA move to the P and E sites, respectively. Catalyzes the coordinated movement of the two tRNA molecules, the mRNA and conformational changes in the ribosome. The protein is Elongation factor G of Prochlorococcus marinus subsp. pastoris (strain CCMP1986 / NIES-2087 / MED4).